Here is a 273-residue protein sequence, read N- to C-terminus: Dermonecrotic toxin LspiSicTox-betaIE1i (273 aa).

Residues glutamate 25 and aspartate 27 each contribute to the Mg(2+) site. Histidine 41 (nucleophile) is an active-site residue. Cysteine 45 and cysteine 51 form a disulfide bridge. Aspartate 85 serves as a coordination point for Mg(2+).

Belongs to the arthropod phospholipase D family. Class I subfamily. It depends on Mg(2+) as a cofactor. Expressed by the venom gland.

It localises to the secreted. It carries out the reaction an N-(acyl)-sphingosylphosphocholine = an N-(acyl)-sphingosyl-1,3-cyclic phosphate + choline. It catalyses the reaction an N-(acyl)-sphingosylphosphoethanolamine = an N-(acyl)-sphingosyl-1,3-cyclic phosphate + ethanolamine. The enzyme catalyses a 1-acyl-sn-glycero-3-phosphocholine = a 1-acyl-sn-glycero-2,3-cyclic phosphate + choline. The catalysed reaction is a 1-acyl-sn-glycero-3-phosphoethanolamine = a 1-acyl-sn-glycero-2,3-cyclic phosphate + ethanolamine. Its function is as follows. Dermonecrotic toxins cleave the phosphodiester linkage between the phosphate and headgroup of certain phospholipids (sphingolipid and lysolipid substrates), forming an alcohol (often choline) and a cyclic phosphate. This toxin acts on sphingomyelin (SM). It may also act on ceramide phosphoethanolamine (CPE), lysophosphatidylcholine (LPC) and lysophosphatidylethanolamine (LPE), but not on lysophosphatidylserine (LPS), and lysophosphatidylglycerol (LPG). It acts by transphosphatidylation, releasing exclusively cyclic phosphate products as second products. Induces dermonecrosis, hemolysis, increased vascular permeability, edema, inflammatory response, and platelet aggregation. In Loxosceles spinulosa (Recluse spider), this protein is Dermonecrotic toxin LspiSicTox-betaIE1i.